The primary structure comprises 83 residues: Large ribosomal subunit protein bL27c (83 aa).

Residues 1–21 (MAHKKGAGSTKNGRDSNAKRL) form a disordered region.

Belongs to the bacterial ribosomal protein bL27 family.

Its subcellular location is the plastid. The protein resides in the chloroplast. The chain is Large ribosomal subunit protein bL27c from Phaeodactylum tricornutum (strain CCAP 1055/1).